The sequence spans 245 residues: 1-(5-phosphoribosyl)-5-[(5-phosphoribosylamino)methylideneamino] imidazole-4-carboxamide isomerase (245 aa).

The active-site Proton acceptor is Asp-7. Asp-129 serves as the catalytic Proton donor.

It belongs to the HisA/HisF family.

It localises to the cytoplasm. It carries out the reaction 1-(5-phospho-beta-D-ribosyl)-5-[(5-phospho-beta-D-ribosylamino)methylideneamino]imidazole-4-carboxamide = 5-[(5-phospho-1-deoxy-D-ribulos-1-ylimino)methylamino]-1-(5-phospho-beta-D-ribosyl)imidazole-4-carboxamide. It participates in amino-acid biosynthesis; L-histidine biosynthesis; L-histidine from 5-phospho-alpha-D-ribose 1-diphosphate: step 4/9. This Klebsiella pneumoniae subsp. pneumoniae (strain ATCC 700721 / MGH 78578) protein is 1-(5-phosphoribosyl)-5-[(5-phosphoribosylamino)methylideneamino] imidazole-4-carboxamide isomerase.